Here is a 310-residue protein sequence, read N- to C-terminus: Methionyl-tRNA formyltransferase (310 aa).

Residue 112 to 115 coordinates (6S)-5,6,7,8-tetrahydrofolate; that stretch reads SLLP.

It belongs to the Fmt family.

The catalysed reaction is L-methionyl-tRNA(fMet) + (6R)-10-formyltetrahydrofolate = N-formyl-L-methionyl-tRNA(fMet) + (6S)-5,6,7,8-tetrahydrofolate + H(+). In terms of biological role, attaches a formyl group to the free amino group of methionyl-tRNA(fMet). The formyl group appears to play a dual role in the initiator identity of N-formylmethionyl-tRNA by promoting its recognition by IF2 and preventing the misappropriation of this tRNA by the elongation apparatus. This is Methionyl-tRNA formyltransferase from Pelagibacter ubique (strain HTCC1062).